Reading from the N-terminus, the 75-residue chain is Small ribosomal subunit protein bS18 (75 aa).

This sequence belongs to the bacterial ribosomal protein bS18 family. As to quaternary structure, part of the 30S ribosomal subunit. Forms a tight heterodimer with protein bS6.

Binds as a heterodimer with protein bS6 to the central domain of the 16S rRNA, where it helps stabilize the platform of the 30S subunit. In Cellvibrio japonicus (strain Ueda107) (Pseudomonas fluorescens subsp. cellulosa), this protein is Small ribosomal subunit protein bS18.